The following is a 159-amino-acid chain: Succinate dehydrogenase [ubiquinone] cytochrome b small subunit, mitochondrial (159 aa).

Residues Met1–His56 constitute a mitochondrion transit peptide. Residues Ser57 to Ser63 lie on the Mitochondrial matrix side of the membrane. The chain crosses the membrane as a helical span at residues Leu64 to Leu85. Over Asn86–Ala90 the chain is Mitochondrial intermembrane. Residues Met91–Val111 form a helical membrane-spanning segment. His102 is a binding site for heme b. The Mitochondrial matrix segment spans residues Thr112 to Lys122. Tyr114 contacts a ubiquinone. A helical transmembrane segment spans residues Ala123–Tyr144. Residues His145–Leu159 lie on the Mitochondrial intermembrane side of the membrane.

This sequence belongs to the CybS family. Component of complex II composed of four subunits: the flavoprotein (FP) SDHA, iron-sulfur protein (IP) SDHB, and a cytochrome b560 composed of SDHC and SDHD.

It localises to the mitochondrion inner membrane. It functions in the pathway carbohydrate metabolism; tricarboxylic acid cycle. In terms of biological role, membrane-anchoring subunit of succinate dehydrogenase (SDH) that is involved in complex II of the mitochondrial electron transport chain and is responsible for transferring electrons from succinate to ubiquinone (coenzyme Q). SDH also oxidizes malate to the non-canonical enol form of oxaloacetate, enol-oxaloacetate. Enol-oxaloacetate, which is a potent inhibitor of the succinate dehydrogenase activity, is further isomerized into keto-oxaloacetate. This is Succinate dehydrogenase [ubiquinone] cytochrome b small subunit, mitochondrial (SDHD) from Homo sapiens (Human).